The primary structure comprises 330 residues: Ketol-acid reductoisomerase (NADP(+)) (330 aa).

The region spanning 1 to 181 is the KARI N-terminal Rossmann domain; the sequence is MKVLYDDDVN…GLTRAGVIET (181 aa). Residues 24 to 27, Arg-47, Ser-52, and 82 to 85 contribute to the NADP(+) site; these read YGSQ and DEIQ. The active site involves His-107. An NADP(+)-binding site is contributed by Gly-133. The KARI C-terminal knotted domain occupies 182–327; it reads TYREETETDL…KNLRIACGLQ (146 aa). Residues Asp-190, Glu-194, Glu-226, and Glu-230 each coordinate Mg(2+). Ser-251 contributes to the substrate binding site.

Belongs to the ketol-acid reductoisomerase family. The cofactor is Mg(2+).

The catalysed reaction is (2R)-2,3-dihydroxy-3-methylbutanoate + NADP(+) = (2S)-2-acetolactate + NADPH + H(+). It carries out the reaction (2R,3R)-2,3-dihydroxy-3-methylpentanoate + NADP(+) = (S)-2-ethyl-2-hydroxy-3-oxobutanoate + NADPH + H(+). The protein operates within amino-acid biosynthesis; L-isoleucine biosynthesis; L-isoleucine from 2-oxobutanoate: step 2/4. Its pathway is amino-acid biosynthesis; L-valine biosynthesis; L-valine from pyruvate: step 2/4. Functionally, involved in the biosynthesis of branched-chain amino acids (BCAA). Catalyzes an alkyl-migration followed by a ketol-acid reduction of (S)-2-acetolactate (S2AL) to yield (R)-2,3-dihydroxy-isovalerate. In the isomerase reaction, S2AL is rearranged via a Mg-dependent methyl migration to produce 3-hydroxy-3-methyl-2-ketobutyrate (HMKB). In the reductase reaction, this 2-ketoacid undergoes a metal-dependent reduction by NADPH to yield (R)-2,3-dihydroxy-isovalerate. In Methanosphaera stadtmanae (strain ATCC 43021 / DSM 3091 / JCM 11832 / MCB-3), this protein is Ketol-acid reductoisomerase (NADP(+)).